The sequence spans 238 residues: Bacterial microcompartment shell protein PduB (238 aa).

2 consecutive BMC circularly permuted domains span residues 14–125 (FVGA…VYNA) and 126–225 (KAGH…LSQF). A disulfide bond links C158 and C197.

Belongs to the EutL/PduB family. In terms of assembly, homotrimerizes to form a pseudohexamer with a central pore 7.5 Angstroms wide and 22 Angstroms long; the pore channel in the crystal binds up to 4 glycerol molecules. A disulfide bond forms in the pore, it is not clear if this is an artifact. The trimers pack into an array.

The protein localises to the bacterial microcompartment. It participates in polyol metabolism; 1,2-propanediol degradation. Functionally, one of the major shell proteins of the bacterial microcompartment (BMC) dedicated to 1,2-propanediol (1,2-PD) degradation. Probably involved in a propanediol fermentation/reuterin formation pathway. The protein is Bacterial microcompartment shell protein PduB of Limosilactobacillus reuteri (strain DSM 20016) (Lactobacillus reuteri).